A 79-amino-acid polypeptide reads, in one-letter code: Conotoxin 12 (79 aa).

An N-terminal signal peptide occupies residues 1–22 (MKLTCVLIITVLFLTASQLITA). Positions 23–47 (DYSRDQRQYRAVRLGDEMRNFKGAR) are excised as a propeptide. 3 disulfide bridges follow: C49/C62, C56/C67, and C61/C77.

It belongs to the conotoxin O1 superfamily. In terms of tissue distribution, expressed by the venom duct.

It is found in the secreted. The sequence is that of Conotoxin 12 from Conus vexillum (Flag cone).